The chain runs to 243 residues: Phosphoribosyl isomerase A (243 aa).

Aspartate 9 serves as the catalytic Proton acceptor. The active-site Proton donor is the aspartate 128.

Belongs to the HisA/HisF family.

It localises to the cytoplasm. The catalysed reaction is 1-(5-phospho-beta-D-ribosyl)-5-[(5-phospho-beta-D-ribosylamino)methylideneamino]imidazole-4-carboxamide = 5-[(5-phospho-1-deoxy-D-ribulos-1-ylimino)methylamino]-1-(5-phospho-beta-D-ribosyl)imidazole-4-carboxamide. It catalyses the reaction N-(5-phospho-beta-D-ribosyl)anthranilate = 1-(2-carboxyphenylamino)-1-deoxy-D-ribulose 5-phosphate. The protein operates within amino-acid biosynthesis; L-histidine biosynthesis; L-histidine from 5-phospho-alpha-D-ribose 1-diphosphate: step 4/9. Its pathway is amino-acid biosynthesis; L-tryptophan biosynthesis; L-tryptophan from chorismate: step 3/5. Involved in both the histidine and tryptophan biosynthetic pathways. This is Phosphoribosyl isomerase A from Mycolicibacterium paratuberculosis (strain ATCC BAA-968 / K-10) (Mycobacterium paratuberculosis).